The following is a 468-amino-acid chain: Chromosomal replication initiator protein DnaA (468 aa).

The domain I, interacts with DnaA modulators stretch occupies residues 1-84 (MSSSLWLQCL…RFEVGSRPVA (84 aa)). Residues 81 to 104 (RPVAAPKPAPTRTPADVAAESSAP) form a disordered region. Positions 84 to 131 (AAPKPAPTRTPADVAAESSAPAQLQARKPVHKTWDDDAQAIADINHRS) are domain II. Residues 132–348 (NVNPKHKFNN…GALNRVIANA (217 aa)) are domain III, AAA+ region. Residues Gly-176, Gly-178, Lys-179, and Thr-180 each contribute to the ATP site. The domain IV, binds dsDNA stretch occupies residues 349 to 468 (NFTGRPITID…YSNLIRTLSS (120 aa)).

This sequence belongs to the DnaA family. Oligomerizes as a right-handed, spiral filament on DNA at oriC.

The protein resides in the cytoplasm. Functionally, plays an essential role in the initiation and regulation of chromosomal replication. ATP-DnaA binds to the origin of replication (oriC) to initiate formation of the DNA replication initiation complex once per cell cycle. Binds the DnaA box (a 9 base pair repeat at the origin) and separates the double-stranded (ds)DNA. Forms a right-handed helical filament on oriC DNA; dsDNA binds to the exterior of the filament while single-stranded (ss)DNA is stabiized in the filament's interior. The ATP-DnaA-oriC complex binds and stabilizes one strand of the AT-rich DNA unwinding element (DUE), permitting loading of DNA polymerase. After initiation quickly degrades to an ADP-DnaA complex that is not apt for DNA replication. Binds acidic phospholipids. The polypeptide is Chromosomal replication initiator protein DnaA (Vibrio campbellii (strain ATCC BAA-1116)).